The primary structure comprises 2451 residues: Reducing polyketide synthase 8 (2451 aa).

The Ketosynthase family 3 (KS3) domain maps to Asn12–Ala434. Active-site for beta-ketoacyl synthase activity residues include Cys174, His313, and His354. A Malonyl-CoA:ACP transacylase (MAT) domain is found at Val538–Met846. An N-terminal hotdog fold region spans residues His940–Pro1085. Positions His940–Ser1254 constitute a PKS/mFAS DH domain. His974 functions as the Proton acceptor; for dehydratase activity in the catalytic mechanism. The interval Leu1100–Ser1254 is C-terminal hotdog fold. Asp1160 (proton donor; for dehydratase activity) is an active-site residue. Positions Leu1294 to Gln1590 are methyltransfrase (MT) domain. In terms of domain architecture, Ketoreductase (KR) spans Thr2088–Val2266. The region spanning Asp2366–Ala2451 is the Carrier domain. Residue Ser2404 is modified to O-(pantetheine 4'-phosphoryl)serine.

It depends on pantetheine 4'-phosphate as a cofactor.

It participates in secondary metabolite biosynthesis. Functionally, reducing polyketide synthase; part of the gene cluster that mediates the biosynthesis of fusamarins, isocoumarin derivatives that show moderate cytotoxicity with IC(50) values between 1 and 50 uM. The polyketide synthase FMN1 probably synthesizes two different polyketides, a tetra- and a pentaketide, containinga varying number of double bonds depending on the selective actions of the trans-enoyl reductase FMN2. Chain fusion will presumably be mediated by the KS domain before finally offloading is catalyzed by the alpha/beta hydrolase fold enzyme FMN3. The sequence is that of Reducing polyketide synthase 8 from Fusarium mangiferae (Mango malformation disease fungus).